Consider the following 480-residue polypeptide: MAAADALLGSLVTGLYDVQAFKFGNFVLKSGLSSPVYIDLRGIISRPSILNQVAEMLFQTAENAEINFDTVCGVPYTALPLATIVCSTHEIPMLIRRKEKKDYGTKRLIEGAVNPGDTCLIIEDVVSSGSSVWETAEVLQKEGLKVTDAVVLVDREQGGRDNLQARGIRLHSVCTLSTVLCILEQQKKINAETVERVKRFIQENAFVAANPNDSLPSVKKEPKELSFGARAELPGTHPVAAKLLRLMQKKETNLCLSADVSESRELLQLADALGSRICLLKIHVDILNDFTLDVMKELTTLAKRHEFLIFEDRKFADIGNTVKKQYEGGVFKIASWADLVNAHAVPGSGVVKGLEEVGLPLHRACLLVAEMSSAGTLATGSYTEAAVQMAEEHSEFVIGFISGSRVSMKPEFLHLTPGVQLEAGGDNLGQQYHSPQEVIGKRGSDIIIVGRGIIASANQLEAAKMYRKAAWEAYLSRLAV.

Alanine 2 is modified (N-acetylalanine). Residues 2-214 (AAADALLGSL…AFVAANPNDS (213 aa)) are OPRTase. Tyrosine 37 is modified (phosphotyrosine). Position 214 is a phosphoserine (serine 214). Residues 215–220 (LPSVKK) are domain linker. Positions 221–480 (EPKELSFGAR…WEAYLSRLAV (260 aa)) are OMPdecase. Serine 257 provides a ligand contact to orotidine 5'-phosphate. UMP contacts are provided by residues serine 257, aspartate 259, and 281 to 283 (KIH). Orotidine 5'-phosphate-binding positions include lysine 281, lysine 314, aspartate 317, threonine 321, serine 372, 430-432 (QQY), and 450-451 (GR). Catalysis depends on for OMPdecase activity residues lysine 314 and aspartate 317. Residues aspartate 317, threonine 321, serine 372, 430–432 (QQY), and 450–451 (GR) each bind UMP.

This sequence in the N-terminal section; belongs to the purine/pyrimidine phosphoribosyltransferase family. The protein in the C-terminal section; belongs to the OMP decarboxylase family. Homodimer; dimerization is required for enzymatic activity.

The enzyme catalyses orotidine 5'-phosphate + diphosphate = orotate + 5-phospho-alpha-D-ribose 1-diphosphate. The catalysed reaction is orotidine 5'-phosphate + H(+) = UMP + CO2. The protein operates within pyrimidine metabolism; UMP biosynthesis via de novo pathway; UMP from orotate: step 1/2. It functions in the pathway pyrimidine metabolism; UMP biosynthesis via de novo pathway; UMP from orotate: step 2/2. Bifunctional enzyme catalyzing the last two steps of de novo pyrimidine biosynthesis, orotate phosphoribosyltransferase (OPRT), which converts orotate to orotidine-5'-monophosphate (OMP), and orotidine-5'-monophosphate decarboxylase (ODC), the terminal enzymatic reaction that decarboxylates OMP to uridine monophosphate (UMP). This chain is Uridine 5'-monophosphate synthase (UMPS), found in Bos taurus (Bovine).